The sequence spans 68 residues: Guanine nucleotide-binding protein G(I)/G(S)/G(O) subunit gamma-10 (68 aa).

An N-acetylserine modification is found at Ser-2. Cys-65 carries the cysteine methyl ester modification. Residue Cys-65 is the site of S-geranylgeranyl cysteine attachment. Residues 66 to 68 (ALL) constitute a propeptide, removed in mature form.

It belongs to the G protein gamma family. In terms of assembly, g proteins are composed of 3 units, alpha, beta and gamma. Abundantly and ubiquitously expressed.

The protein resides in the cell membrane. Guanine nucleotide-binding proteins (G proteins) are involved as a modulator or transducer in various transmembrane signaling systems. The beta and gamma chains are required for the GTPase activity, for replacement of GDP by GTP, and for G protein-effector interaction. Interacts with beta-1 and beta-2, but not with beta-3. This chain is Guanine nucleotide-binding protein G(I)/G(S)/G(O) subunit gamma-10 (GNG10), found in Homo sapiens (Human).